Here is a 2521-residue protein sequence, read N- to C-terminus: Piezo-type mechanosensitive ion channel component 1 (2521 aa).

At 1–12 (MEPHVLGAVLYW) the chain is on the cytoplasmic side. Residues 13–25 (LLLPCALLAACLL) form a helical membrane-spanning segment. Over 26–28 (RFS) the chain is Extracellular. The helical transmembrane segment at 29 to 44 (GLSLVYLLFLLLLPWF) threads the bilayer. Residues 45-58 (PGPTRCGLQGHTGR) are Cytoplasmic-facing. A helical transmembrane segment spans residues 59 to 81 (LLRALLGLSLLFLVAHLALQICL). Residues 82–121 (HIVPRLDQLLGPSCSRWETLSRHIGVTRLDLKDIPNAIRL) lie on the Extracellular side of the membrane. A helical transmembrane segment spans residues 122 to 138 (VAPDLGILVVSSVCLGI). Residues 139-194 (CGRLARNTRQSPHPRELDDDERDVDASPTAGLQEAATLAPTRRSRLAARFRVTAHW) are Cytoplasmic-facing. Residues 195 to 214 (LLVAAGRVLAVTLLALAGIA) traverse the membrane as a helical segment. The Extracellular portion of the chain corresponds to 215-216 (HP). Residues 217 to 236 (SALSSVYLLLFLALCTWWAC) form a helical membrane-spanning segment. Over 237–247 (HFPISTRGFSR) the chain is Cytoplasmic. Residues 248–268 (LCVAVGCFGAGHLICLYCYQM) form a helical membrane-spanning segment. Residues 269-309 (PLAQALLPPAGIWARVLGLKDFVGPTNCSSPHALVLNTGLD) lie on the Extracellular side of the membrane. A glycan (N-linked (GlcNAc...) asparagine) is linked at asparagine 295. A helical membrane pass occupies residues 310-330 (WPVYASPGVLLLLCYATASLR). Residues 331 to 417 (KLRAYRPSGQ…EASPLHSLGH (87 aa)) are Cytoplasmic-facing. The chain crosses the membrane as a helical span at residues 418 to 438 (LIMDQSYVCALIAMMVWSITY). Topologically, residues 439–440 (HS) are extracellular. A helical membrane pass occupies residues 441–456 (WLTFVLLLWACLIWTV). Over 457–461 (RSRHQ) the chain is Cytoplasmic. Residues 462–484 (LAMLCSPCILLYGMTLCCLRYVW) traverse the membrane as a helical segment. Topologically, residues 485–512 (AMDLRPELPTTLGPVSLRQLGLEHTRYP) are extracellular. A helical transmembrane segment spans residues 513–530 (CLDLGAMLLYTLTFWLLL). Residues 531–574 (RQFVKEKLLKWAESPAALTEVTVADTEPTRTQTLLQSLGELVKG) are Cytoplasmic-facing. Residues 575–595 (VYAKYWIYVCAGMFIVVSFAG) form a helical membrane-spanning segment. Position 596 (arginine 596) is a topological domain, extracellular. The chain crosses the membrane as a helical span at residues 597–617 (LVVYKIVYMFLFLLCLTLFQV). Over 618 to 627 (YYSLWRKLLK) the chain is Cytoplasmic. The helical transmembrane segment at 628–649 (AFWWLVVAYTMLVLIAVYTFQF) threads the bilayer. Residues 650 to 679 (QDFPAYWRNLTGFTDEQLGDLGLEQFSVSE) lie on the Extracellular side of the membrane. A helical transmembrane segment spans residues 680-696 (LFSSILVPGFFLLACIL). Residues 697-816 (QLHYFHRPFM…RRLLELHVFK (120 aa)) lie on the Cytoplasmic side of the membrane. A Phosphothreonine modification is found at threonine 734. The segment at 738–769 (REEQQEHQQQQQEEEEEEEDSRDEGLGVATPH) is disordered. The span at 749 to 759 (QEEEEEEEDSR) shows a compositional bias: acidic residues. At serine 758 the chain carries Phosphoserine. Residues 817-828 (LVALYTVWVALK) form a helical membrane-spanning segment. Residues 829-831 (EVS) are Extracellular-facing. The helical transmembrane segment at 832–845 (VMNLLLVVLWAFAL) threads the bilayer. Over 846–859 (PYPRFRPMASCLST) the chain is Cytoplasmic. The helical transmembrane segment at 860-874 (VWTCVIIVCKMLYQL) threads the bilayer. Over 875-926 (KVVNPQEYSSNCTEPFPNSTNLLPTEISQSLLYRGPVDPANWFGVRKGFPNL) the chain is Extracellular. The helical transmembrane segment at 927–954 (GYIQNHLQVLLLLVFEAIVYRRQEHYRR) threads the bilayer. Residues 955–994 (QHQLAPLPAQAVFASGTRQQLDQDLLGCLKYFINFFFYKF) are Cytoplasmic-facing. Residues 995-1010 (GLEICFLMAVNVIGQR) form a helical membrane-spanning segment. Topologically, residues 1011–1012 (MN) are extracellular. The chain crosses the membrane as a helical span at residues 1013–1028 (FLVTLHGCWLVAILTR). Over 1029-1041 (RHRQAIARLWPNY) the chain is Cytoplasmic. Residues 1042-1057 (CLFLALFLLYQYLLCL) traverse the membrane as a helical segment. Residues 1058–1096 (GMPPALCIDYPWRWSRAVPMNSALIKWLYLPDFFRAPNS) lie on the Extracellular side of the membrane. A helical transmembrane segment spans residues 1097–1118 (TNLISDFLLLLCASQQWQVFSA). Residues 1119 to 1153 (ERTEEWQRMAGVNTDRLEPLRGEPNPVPNFIHCRS) lie on the Cytoplasmic side of the membrane. The chain crosses the membrane as a helical span at residues 1154–1180 (YLDMLKVAVFRYLFWLVLVVVFVTGAT). Residues 1181–1185 (RISIF) are Extracellular-facing. Residues 1186–1204 (GLGYLLACFYLLLFGTALL) form a helical membrane-spanning segment. Topologically, residues 1205-1217 (QRDTRARLVLWDC) are cytoplasmic. Residues 1218-1236 (LILYNVTVIISKNMLSLLA) form a helical membrane-spanning segment. Topologically, residues 1237–1285 (CVFVEQMQTGFCWVIQLFSLVCTVKGYYDPKEMMDRDQDCLLPVEEAGI) are extracellular. The chain crosses the membrane as a helical span at residues 1286–1302 (IWDSVCFFFLLLQRRVF). Residues 1303–1656 (LSHYYLHVRA…ELLLDRRLRI (354 aa)) lie on the Cytoplasmic side of the membrane. The stretch at 1339-1368 (HRRIEEKSLAQLKRQMERIRAKQEKHRQGR) forms a coiled coil. 3 disordered regions span residues 1356–1402 (RIRA…RRQW), 1462–1498 (RQQE…EAAA), and 1576–1630 (TLPG…DPGE). A compositionally biased stretch (low complexity) spans 1385–1398 (LEPGPDSPGGSSPP). Phosphoserine is present on residues serine 1391 and serine 1396. Serine 1636 and serine 1646 each carry phosphoserine. A helical transmembrane segment spans residues 1657 to 1700 (PELEEAELFAEGQGRALRLLRAVYQCVAAHSELLCYFIIILNHM). The Extracellular portion of the chain corresponds to 1701-1704 (VTAS). Residues 1705–1720 (AGSLVLPVLVFLWAML) form a helical membrane-spanning segment. Residues 1721–1728 (SIPRPSKR) lie on the Cytoplasmic side of the membrane. The chain crosses the membrane as a helical span at residues 1729 to 1747 (FWMTAIVFTEIAVVVKYLF). Residues 1748–1779 (QFGFFPWNSHVVLRRYENKPYFPPRILGLEKT) lie on the Extracellular side of the membrane. The helical transmembrane segment at 1780-1801 (DGYIKYDLVQLMALFFHRSQLL) threads the bilayer. At 1802–1960 (CYGLWDHEED…HTKYRAATDV (159 aa)) the chain is on the cytoplasmic side. Basic and acidic residues predominate over residues 1811 to 1822 (DSPSKEHDKSGE). The tract at residues 1811–1921 (DSPSKEHDKS…RPSRSGGRVR (111 aa)) is disordered. Threonine 1854 bears the Phosphothreonine mark. The span at 1859–1868 (VELRPRDTRR) shows a compositional bias: basic and acidic residues. Basic residues predominate over residues 1869-1878 (ISLRFRRRKK). A compositionally biased stretch (acidic residues) spans 1890–1903 (EAEDREEEEGEEEK). Basic and acidic residues predominate over residues 1904-1913 (EAPTGREKRP). A helical membrane pass occupies residues 1961-1980 (YALMFLADVVDFIIIIFGFW). Residues 1981-2000 (AFGKHSAATDITSSLSDDQV) are Extracellular-facing. A helical transmembrane segment spans residues 2001 to 2017 (PEAFLVMLLIQFSTMVV). Residues 2018-2031 (DRALYLRKTVLGKL) are Cytoplasmic-facing. Residues 2032-2052 (AFQVALVLAIHLWMFFILPAV) traverse the membrane as a helical segment. Over 2053–2060 (TERMFNQN) the chain is Extracellular. Residues 2061–2076 (VVAQLWYFVKCIYFAL) form a helical membrane-spanning segment. Topologically, residues 2077–2176 (SAYQIRCGYP…KKKIVKYGMG (100 aa)) are cytoplasmic. The helical transmembrane segment at 2177-2197 (GLIILFLIAIIWFPLLFMSLV) threads the bilayer. At 2198-2431 (RSVVGVVNQP…IFSDKVSPPS (234 aa)) the chain is on the extracellular side. The N-linked (GlcNAc...) asparagine glycan is linked to asparagine 2294. Residues cysteine 2411 and cysteine 2415 are joined by a disulfide bond. A helical transmembrane segment spans residues 2432–2452 (LGFLAGYGIMGLYVSIVLVIG). The Cytoplasmic segment spans residues 2453 to 2521 (KFVRGFFSEI…TMIKWTREKE (69 aa)).

The protein belongs to the PIEZO (TC 1.A.75) family. In terms of assembly, homotrimer; the homotrimer forms a propeller-shaped Piezo channel with a cation-ion conducting pore. Heterotrimeric interaction may occur between PIEZO1 and PIEZO2. Interacts with PKD2. Interacts with STOML3. Interacts with TMC1, TMC2, PCDH15 and CIB2; the interaction may be part of the MET complex. Interacts with MDFIC (via C-terminus); the interaction prolongs Piezo channel inactivation. Interacts with MDFI (via C-terminus); the interaction prolongs Piezo channel inactivation. In terms of tissue distribution, expressed in numerous tissues. In normal brain, expressed exclusively in neurons, not in astrocytes. In Alzheimer disease brains, expressed in about half of the activated astrocytes located around classical senile plaques. In Parkinson disease substantia nigra, not detected in melanin-containing neurons nor in activated astrocytes. Expressed in erythrocytes (at protein level). Expressed in myoblasts (at protein level).

It localises to the endoplasmic reticulum membrane. It is found in the endoplasmic reticulum-Golgi intermediate compartment membrane. The protein resides in the cell membrane. Its subcellular location is the cell projection. The protein localises to the lamellipodium membrane. It catalyses the reaction K(+)(in) = K(+)(out). The catalysed reaction is Na(+)(in) = Na(+)(out). It carries out the reaction Ca(2+)(in) = Ca(2+)(out). The enzyme catalyses Mg(2+)(in) = Mg(2+)(out). With respect to regulation, regulated by auxillary subunits MDFIC and MDFI. Down-regulated by phosphatidylserines exposed on the cell surface. Divalent ions decrease the single-channel permeability of K(+). Functionally, pore-forming subunit of the mechanosensitive non-specific cation Piezo channel required for rapidly adapting mechanically activated (MA) currents and has a key role in sensing touch and tactile pain. Piezo channels are homotrimeric three-blade propeller-shaped structures that utilize a cap-motion and plug-and-latch mechanism to gate their ion-conducting pathways. Generates currents characterized by a linear current-voltage relationship that are sensitive to ruthenium red and gadolinium. Conductance to monovalent alkali ions is highest for K(+), intermediate for Na(+) and lowest for Li(+). Divalent ions except for Mn(2+) permeate the channel but more slowly than the monovalent ions and they also reduce K(+) currents. Plays a key role in epithelial cell adhesion by maintaining integrin activation through R-Ras recruitment to the ER, most probably in its activated state, and subsequent stimulation of calpain signaling. In inner ear hair cells, PIEZO1/2 subunits may constitute part of the mechanotransducer (MET) non-selective cation channel complex where they may act as pore-forming ion-conducting component in the complex. In the kidney, may contribute to the detection of intraluminal pressure changes and to urine flow sensing. Acts as a shear-stress sensor that promotes endothelial cell organization and alignment in the direction of blood flow through calpain activation. Plays a key role in blood vessel formation and vascular structure in both development and adult physiology. Acts as a sensor of phosphatidylserine (PS) flipping at the plasma membrane and governs morphogenesis of muscle cells. In myoblasts, flippase-mediated PS enrichment at the inner leaflet of plasma membrane triggers channel activation and Ca2+ influx followed by Rho GTPases signal transduction, leading to assembly of cortical actomyosin fibers and myotube formation. The protein is Piezo-type mechanosensitive ion channel component 1 of Homo sapiens (Human).